The sequence spans 162 residues: Ribosomal RNA large subunit methyltransferase H (162 aa).

2 residues coordinate S-adenosyl-L-methionine: Leu-78 and Gly-110.

This sequence belongs to the RNA methyltransferase RlmH family. In terms of assembly, homodimer.

Its subcellular location is the cytoplasm. It catalyses the reaction pseudouridine(1915) in 23S rRNA + S-adenosyl-L-methionine = N(3)-methylpseudouridine(1915) in 23S rRNA + S-adenosyl-L-homocysteine + H(+). Specifically methylates the pseudouridine at position 1915 (m3Psi1915) in 23S rRNA. The sequence is that of Ribosomal RNA large subunit methyltransferase H from Bradyrhizobium sp. (strain ORS 278).